The primary structure comprises 264 residues: SPARC (264 aa).

Positions 1–16 (MRYALAACLLLLAASS) are cleaved as a signal peptide. In terms of domain architecture, Follistatin-like spans 52 to 74 (PCEDHQCGWGKECVVGKKGEPTC). 7 cysteine pairs are disulfide-bonded: Cys53/Cys64, Cys58/Cys74, Cys76/Cys110, Cys80/Cys103, Cys92/Cys135, Cys141/Cys228, and Cys236/Cys252. The Kazal-like domain maps to 68 to 137 (KKGEPTCECI…HLEYLGECKK (70 aa)). Residue Asn96 is glycosylated (N-linked (GlcNAc...) asparagine). The region spanning 224 to 259 (PMESCIKPFLEGCDANNDGNISIKEWGKCLGLKEGE) is the EF-hand domain. Residues Asp237, Asn239, Asp241, Asn243, and Glu248 each coordinate Ca(2+). An N-linked (GlcNAc...) asparagine glycan is attached at Asn243.

Belongs to the SPARC family. As to expression, expressed by body wall and sex muscle cells. Probable association with basement membranes.

The protein localises to the secreted. Its subcellular location is the extracellular space. It localises to the extracellular matrix. The protein resides in the basement membrane. In terms of biological role, has a high affinity for collagen. Affects nematode body morphology and mobility. Essential for C.elegans development and muscle function. The cysteine-rich region could have protease inhibitory activity or may provide the framework for a protein binding module. Probable role in skeletal morphogenesis. This is SPARC (ost-1) from Caenorhabditis elegans.